We begin with the raw amino-acid sequence, 446 residues long: GTPase Der (446 aa).

EngA-type G domains follow at residues Thr2–Pro166 and Ile179–Asn354. GTP contacts are provided by residues Gly8 to Ser15, Asp55 to Phe59, Asn118 to Asp121, Gly185 to Ser192, Asp232 to Ile236, and Asn297 to Asp300. Residues Gln355–Gln440 enclose the KH-like domain.

This sequence belongs to the TRAFAC class TrmE-Era-EngA-EngB-Septin-like GTPase superfamily. EngA (Der) GTPase family. Associates with the 50S ribosomal subunit.

GTPase that plays an essential role in the late steps of ribosome biogenesis. The polypeptide is GTPase Der (Syntrophobacter fumaroxidans (strain DSM 10017 / MPOB)).